The chain runs to 329 residues: MARRYLFEFEKPLVELEQQIEQIRELARDSEVDVSQQLLQLETLAARRREEIFQALTPAEKIQVARHPHRPSTLDFIQMFCDDWVELHGDRRGSDDQALVGGVGRIGKRSVLLIGHQKGRDTKENVARNFGMATPGGYRKALRLMDHADRFRLPILTFIDTPGAYAGLLAEEQGQGEAIAVNLREMFRLRVPVIATVIGEGGSGGALGIGVADRLLMFEHSVYTVASPEACASILWRDAAKAPEAAAALKITGPDLLSLGVVDEVLPEPAGGNNWAPLQAGEVLREAIERHLDDLLGLKVNQLRESRYRKFRAMGRVLDPSSSETGLPA.

Residues 40-294 (QLETLAARRR…REAIERHLDD (255 aa)) enclose the CoA carboxyltransferase C-terminal domain.

The protein belongs to the AccA family. In terms of assembly, acetyl-CoA carboxylase is a heterohexamer composed of biotin carboxyl carrier protein (AccB), biotin carboxylase (AccC) and two subunits each of ACCase subunit alpha (AccA) and ACCase subunit beta (AccD).

Its subcellular location is the cytoplasm. The enzyme catalyses N(6)-carboxybiotinyl-L-lysyl-[protein] + acetyl-CoA = N(6)-biotinyl-L-lysyl-[protein] + malonyl-CoA. The protein operates within lipid metabolism; malonyl-CoA biosynthesis; malonyl-CoA from acetyl-CoA: step 1/1. Functionally, component of the acetyl coenzyme A carboxylase (ACC) complex. First, biotin carboxylase catalyzes the carboxylation of biotin on its carrier protein (BCCP) and then the CO(2) group is transferred by the carboxyltransferase to acetyl-CoA to form malonyl-CoA. The polypeptide is Acetyl-coenzyme A carboxylase carboxyl transferase subunit alpha (Prochlorococcus marinus (strain MIT 9303)).